An 894-amino-acid chain; its full sequence is Histone-lysine N-methyltransferase EZ2 (894 aa).

The span at M1–S11 shows a compositional bias: low complexity. Disordered stretches follow at residues M1–A25, S395–K447, and K491–Q513. Over residues S395 to P421 the composition is skewed to polar residues. Basic residues predominate over residues L425 to P435. The segment covering P503–Q513 has biased composition (polar residues). The 51-residue stretch at T527–A577 folds into the SANT domain. A CXC domain is found at A627 to D731. The SET domain maps to Q746–R861. Positions A867–R894 are disordered. Over residues R872–V884 the composition is skewed to basic and acidic residues. The segment covering S885–R894 has biased composition (basic residues).

This sequence belongs to the class V-like SAM-binding methyltransferase superfamily. Histone-lysine methyltransferase family. EZ subfamily.

It localises to the nucleus. It catalyses the reaction L-lysyl(27)-[histone H3] + 3 S-adenosyl-L-methionine = N(6),N(6),N(6)-trimethyl-L-lysyl(27)-[histone H3] + 3 S-adenosyl-L-homocysteine + 3 H(+). Functionally, polycomb group (PcG) protein. Catalytic subunit of some PcG multiprotein complex, which methylates 'Lys-27' of histone H3, leading to transcriptional repression of the affected target genes. PcG proteins are not required to initiate repression, but to maintain it during later stages of development. The protein is Histone-lysine N-methyltransferase EZ2 (EZ2) of Zea mays (Maize).